Reading from the N-terminus, the 271-residue chain is Dermonecrotic toxin SpeSicTox-betaIF1 (271 aa).

His3 is an active-site residue. Residues Glu23 and Asp25 each contribute to the Mg(2+) site. The Nucleophile role is filled by His39. Cystine bridges form between Cys43–Cys49 and Cys45–Cys188. Mg(2+) is bound at residue Asp83.

Belongs to the arthropod phospholipase D family. Class II subfamily. It depends on Mg(2+) as a cofactor. As to expression, expressed by the venom gland.

It localises to the secreted. The enzyme catalyses an N-(acyl)-sphingosylphosphocholine = an N-(acyl)-sphingosyl-1,3-cyclic phosphate + choline. It carries out the reaction an N-(acyl)-sphingosylphosphoethanolamine = an N-(acyl)-sphingosyl-1,3-cyclic phosphate + ethanolamine. The catalysed reaction is a 1-acyl-sn-glycero-3-phosphocholine = a 1-acyl-sn-glycero-2,3-cyclic phosphate + choline. It catalyses the reaction a 1-acyl-sn-glycero-3-phosphoethanolamine = a 1-acyl-sn-glycero-2,3-cyclic phosphate + ethanolamine. Dermonecrotic toxins cleave the phosphodiester linkage between the phosphate and headgroup of certain phospholipids (sphingolipid and lysolipid substrates), forming an alcohol (often choline) and a cyclic phosphate. This toxin acts on sphingomyelin (SM). It may also act on ceramide phosphoethanolamine (CPE), lysophosphatidylcholine (LPC) and lysophosphatidylethanolamine (LPE), but not on lysophosphatidylserine (LPS), and lysophosphatidylglycerol (LPG). It acts by transphosphatidylation, releasing exclusively cyclic phosphate products as second products. Induces dermonecrosis, hemolysis, increased vascular permeability, edema, inflammatory response, and platelet aggregation. The sequence is that of Dermonecrotic toxin SpeSicTox-betaIF1 from Sicarius peruensis (Six-eyed sand spider).